Consider the following 182-residue polypeptide: uncharacterized protein (182 aa).

The segment covering 1 to 23 has biased composition (polar residues); sequence MILSDQNFLQTQWKEPQTAQSKN. Positions 1–33 are disordered; it reads MILSDQNFLQTQWKEPQTAQSKNTESKCEFHGN.

The protein belongs to the peptidase M24 family.

This is an uncharacterized protein from Caenorhabditis elegans.